Here is a 333-residue protein sequence, read N- to C-terminus: Lipoyl synthase (333 aa).

Residues 1–15 (MSTLVESPVPSNDSQ) show a composition bias toward polar residues. The tract at residues 1-34 (MSTLVESPVPSNDSQAAAPAAYDPTQKQKSQAKT) is disordered. The [4Fe-4S] cluster site is built by cysteine 80, cysteine 85, cysteine 91, cysteine 106, cysteine 110, cysteine 113, and serine 320. The 219-residue stretch at 91-309 (CFGKGTATFM…EREAYAMGFT (219 aa)) folds into the Radical SAM core domain.

The protein belongs to the radical SAM superfamily. Lipoyl synthase family. [4Fe-4S] cluster serves as cofactor.

It is found in the cytoplasm. It carries out the reaction [[Fe-S] cluster scaffold protein carrying a second [4Fe-4S](2+) cluster] + N(6)-octanoyl-L-lysyl-[protein] + 2 oxidized [2Fe-2S]-[ferredoxin] + 2 S-adenosyl-L-methionine + 4 H(+) = [[Fe-S] cluster scaffold protein] + N(6)-[(R)-dihydrolipoyl]-L-lysyl-[protein] + 4 Fe(3+) + 2 hydrogen sulfide + 2 5'-deoxyadenosine + 2 L-methionine + 2 reduced [2Fe-2S]-[ferredoxin]. It functions in the pathway protein modification; protein lipoylation via endogenous pathway; protein N(6)-(lipoyl)lysine from octanoyl-[acyl-carrier-protein]: step 2/2. In terms of biological role, catalyzes the radical-mediated insertion of two sulfur atoms into the C-6 and C-8 positions of the octanoyl moiety bound to the lipoyl domains of lipoate-dependent enzymes, thereby converting the octanoylated domains into lipoylated derivatives. This is Lipoyl synthase from Bordetella parapertussis (strain 12822 / ATCC BAA-587 / NCTC 13253).